Here is a 572-residue protein sequence, read N- to C-terminus: Urease subunit alpha (572 aa).

Residues glycine 136–phenylalanine 572 enclose the Urease domain. Positions 141, 143, and 224 each coordinate Ni(2+). Lysine 224 is modified (N6-carboxylysine). Substrate is bound at residue histidine 226. 2 residues coordinate Ni(2+): histidine 253 and histidine 279. Catalysis depends on histidine 327, which acts as the Proton donor. A Ni(2+)-binding site is contributed by aspartate 367.

The protein belongs to the metallo-dependent hydrolases superfamily. Urease alpha subunit family. In terms of assembly, heterotrimer of UreA (gamma), UreB (beta) and UreC (alpha) subunits. Three heterotrimers associate to form the active enzyme. It depends on Ni cation as a cofactor. Post-translationally, carboxylation allows a single lysine to coordinate two nickel ions.

The protein localises to the cytoplasm. The enzyme catalyses urea + 2 H2O + H(+) = hydrogencarbonate + 2 NH4(+). The protein operates within nitrogen metabolism; urea degradation; CO(2) and NH(3) from urea (urease route): step 1/1. This Haemophilus influenzae (strain PittGG) protein is Urease subunit alpha.